The chain runs to 211 residues: HTH-type transcriptional regulator AlkX (211 aa).

The 61-residue stretch at 22–82 (ALLRDSVLDA…GYALRLADRL (61 aa)) folds into the HTH tetR-type domain. Residues 45–64 (TLSDVARAAGISRQTIYNEF) constitute a DNA-binding region (H-T-H motif).

Homodimer.

The protein resides in the cytoplasm. DNA-binding activity may be regulated by fatty acids. Its function is as follows. Represses the expression of the alkB-rubAB operon, which encodes the alkane hydroxylase AlkB and the rubredoxins RubA and RubB. Acts by binding to the promoter region of the operon. In addition, EMSA analysis show that AlkX can bind to the promoter region of mmpS1 and mmpL3 and to the intragenic region of mmpL11, suggesting that it may participate in the regulatory network that controls the expression of MmpL lipid transporters. This chain is HTH-type transcriptional regulator AlkX, found in Mycobacterium tuberculosis (strain ATCC 25618 / H37Rv).